The chain runs to 102 residues: Integration host factor subunit beta (102 aa).

Belongs to the bacterial histone-like protein family. As to quaternary structure, heterodimer of an alpha and a beta chain.

This protein is one of the two subunits of integration host factor, a specific DNA-binding protein that functions in genetic recombination as well as in transcriptional and translational control. This Rhizobium radiobacter (Agrobacterium tumefaciens) protein is Integration host factor subunit beta (ihfB).